The chain runs to 236 residues: Mitochondrial-abundant heat soluble protein (236 aa).

Residues 1-73 (MSRYLLRDVQ…AARAGVVLRG (73 aa)) constitute a mitochondrion transit peptide. Disordered regions lie at residues 102-135 (RIHS…NEAA) and 165-209 (RSNG…EIVA). Polar residues-rich tracts occupy residues 105–126 (SQSS…NSPQ) and 192–202 (APDSSKNTKSV). Residues 126-143 (QPEGKANEAAERAKQFMN) carry the MAHS motif motif.

It localises to the mitochondrion. Its function is as follows. Mitochondrial heat soluble protein acting as a molecular shield in water-deficient condition. The polypeptide is Mitochondrial-abundant heat soluble protein (Ramazzottius varieornatus (Water bear)).